The chain runs to 31 residues: Cliotide T11 (31 aa).

Positions 1 to 31 (GIPCGESCVFIPCTITALLGCSCKDKVCYKN) form a cross-link, cyclopeptide (Gly-Asn). Cystine bridges form between Cys4–Cys21, Cys8–Cys23, and Cys13–Cys28.

Post-translationally, contains 3 disulfide bonds. In terms of processing, this is a cyclic peptide. In terms of tissue distribution, expressed in seed but not in root, nodule, flower, stem, shoot, leaf and pod (at protein level).

Functionally, probably participates in a plant defense mechanism. The sequence is that of Cliotide T11 from Clitoria ternatea (Butterfly pea).